Reading from the N-terminus, the 109-residue chain is Cytochrome c (109 aa).

Heme c is bound by residues Cys-25, Cys-28, His-29, and Met-88.

The protein belongs to the cytochrome c family. In terms of processing, binds 1 heme c group covalently per subunit.

It localises to the mitochondrion intermembrane space. Electron carrier protein. The oxidized form of the cytochrome c heme group can accept an electron from the heme group of the cytochrome c1 subunit of cytochrome reductase. Cytochrome c then transfers this electron to the cytochrome oxidase complex, the final protein carrier in the mitochondrial electron-transport chain. This is Cytochrome c from Tetrahymena pyriformis.